Reading from the N-terminus, the 429-residue chain is Glutamate-1-semialdehyde 2,1-aminomutase 2 (429 aa).

An N6-(pyridoxal phosphate)lysine modification is found at K268.

The protein belongs to the class-III pyridoxal-phosphate-dependent aminotransferase family. HemL subfamily. In terms of assembly, homodimer. Pyridoxal 5'-phosphate is required as a cofactor.

Its subcellular location is the cytoplasm. It catalyses the reaction (S)-4-amino-5-oxopentanoate = 5-aminolevulinate. It functions in the pathway porphyrin-containing compound metabolism; protoporphyrin-IX biosynthesis; 5-aminolevulinate from L-glutamyl-tRNA(Glu): step 2/2. This Geobacillus kaustophilus (strain HTA426) protein is Glutamate-1-semialdehyde 2,1-aminomutase 2.